A 608-amino-acid polypeptide reads, in one-letter code: Chaperone protein HtpG (608 aa).

The tract at residues 1–332 (MQFQTEVNQL…VEDLPLNVSR (332 aa)) is a; substrate-binding. The segment at 333-536 (EILQENQILK…KNKPDFAMQQ (204 aa)) is b. Residues 537–608 (LLKQMGQEQN…LTKIINKAFS (72 aa)) are c.

The protein belongs to the heat shock protein 90 family. Homodimer.

It is found in the cytoplasm. Molecular chaperone. Has ATPase activity. The protein is Chaperone protein HtpG of Campylobacter jejuni (strain RM1221).